Reading from the N-terminus, the 563-residue chain is Arginine--tRNA ligase (563 aa).

Positions 121–131 match the 'HIGH' region motif; the sequence is PNIAKPFSIGH.

This sequence belongs to the class-I aminoacyl-tRNA synthetase family. In terms of assembly, monomer.

It localises to the cytoplasm. It catalyses the reaction tRNA(Arg) + L-arginine + ATP = L-arginyl-tRNA(Arg) + AMP + diphosphate. This chain is Arginine--tRNA ligase, found in Streptococcus pyogenes serotype M3 (strain ATCC BAA-595 / MGAS315).